A 1530-amino-acid chain; its full sequence is DNA-directed RNA polymerase III subunit RPC1 (1530 aa).

7 residues coordinate Zn(2+): Cys74, Cys77, Cys84, His87, Cys114, Cys117, and Cys161. Mg(2+) contacts are provided by Asp503, Asp505, and Asp507. Positions 846-858 (PTEFFFHTMAGRE) are bridging helix. The span at 992–1001 (EEQESREDAL) shows a compositional bias: basic and acidic residues. Disordered stretches follow at residues 992 to 1016 (EEQE…SRPR) and 1057 to 1099 (NLLN…SKEG).

Belongs to the RNA polymerase beta' chain family. As to quaternary structure, component of the RNA polymerase III (Pol III) complex consisting of 17 subunits.

Its subcellular location is the nucleus. It carries out the reaction RNA(n) + a ribonucleoside 5'-triphosphate = RNA(n+1) + diphosphate. Functionally, DNA-dependent RNA polymerase catalyzes the transcription of DNA into RNA using the four ribonucleoside triphosphates as substrates. Largest and catalytic core component of RNA polymerase III which synthesizes small RNAs, such as 5S rRNA and tRNAs. Forms the polymerase active center together with the second largest subunit. A single-stranded DNA template strand of the promoter is positioned within the central active site cleft of Pol III. A bridging helix emanates from RPC1 and crosses the cleft near the catalytic site and is thought to promote translocation of Pol III by acting as a ratchet that moves the RNA-DNA hybrid through the active site by switching from straight to bent conformations at each step of nucleotide addition. The chain is DNA-directed RNA polymerase III subunit RPC1 from Trypanosoma brucei brucei.